Reading from the N-terminus, the 120-residue chain is MNAQEIIRSLEAEQLKSNLPEIHVGDTVKVGVIIQEGNKERTQPYEGIVIAKRNSGINATITVRRIFQGVGVERVFLLHSPRVESIKIIKRGKVRRAKLYYLRDRVGKATRVKQRFDREL.

It belongs to the bacterial ribosomal protein bL19 family.

In terms of biological role, this protein is located at the 30S-50S ribosomal subunit interface and may play a role in the structure and function of the aminoacyl-tRNA binding site. This chain is Large ribosomal subunit protein bL19, found in Cyanothece sp. (strain PCC 7425 / ATCC 29141).